The primary structure comprises 178 residues: Endoribonuclease YbeY (178 aa).

Zn(2+) contacts are provided by H118, H122, and H128. The interval Y156 to P178 is disordered. Basic and acidic residues predominate over residues D159 to P178.

Belongs to the endoribonuclease YbeY family. Zn(2+) is required as a cofactor.

It localises to the cytoplasm. In terms of biological role, single strand-specific metallo-endoribonuclease involved in late-stage 70S ribosome quality control and in maturation of the 3' terminus of the 16S rRNA. This Mycobacterium marinum (strain ATCC BAA-535 / M) protein is Endoribonuclease YbeY.